We begin with the raw amino-acid sequence, 105 residues long: Small ribosomal subunit protein eS24 (105 aa).

The disordered stretch occupies residues 85 to 105 (SVIAKNEEPEEEPEEEAEDAE). Residues 92-105 (EPEEEPEEEAEDAE) show a composition bias toward acidic residues.

The protein belongs to the eukaryotic ribosomal protein eS24 family.

This is Small ribosomal subunit protein eS24 from Methanosphaera stadtmanae (strain ATCC 43021 / DSM 3091 / JCM 11832 / MCB-3).